The sequence spans 598 residues: Elongation factor 4 (598 aa).

The tr-type G domain maps to 4-186; the sequence is INIRNFAIIA…AIVSRLPAPS (183 aa). GTP-binding positions include 16–21 and 133–136; these read DHGKST and NKID.

The protein belongs to the TRAFAC class translation factor GTPase superfamily. Classic translation factor GTPase family. LepA subfamily.

It localises to the cell inner membrane. The enzyme catalyses GTP + H2O = GDP + phosphate + H(+). In terms of biological role, required for accurate and efficient protein synthesis under certain stress conditions. May act as a fidelity factor of the translation reaction, by catalyzing a one-codon backward translocation of tRNAs on improperly translocated ribosomes. Back-translocation proceeds from a post-translocation (POST) complex to a pre-translocation (PRE) complex, thus giving elongation factor G a second chance to translocate the tRNAs correctly. Binds to ribosomes in a GTP-dependent manner. The polypeptide is Elongation factor 4 (Ehrlichia ruminantium (strain Gardel)).